The chain runs to 547 residues: Phosphoethanolamine transferase EptA (547 aa).

The Cytoplasmic portion of the chain corresponds to 1 to 9; it reads MLKRFLKRP. The helical transmembrane segment at 10 to 30 threads the bilayer; it reads VLGQIAWLLLFSFYIAVCLNI. At 31–47 the chain is on the periplasmic side; sequence AFYKQVLQDLPLNSLRN. A helical transmembrane segment spans residues 48–68; the sequence is VLVFISMPVVAFSVVNSVLTL. Over 69-79 the chain is Cytoplasmic; sequence ASFIWLNRLLA. Residues 80–100 traverse the membrane as a helical segment; the sequence is CVFILVGAAAQYFILTYGIII. The Periplasmic segment spans residues 101–123; it reads DRSMIANMMDTTPAETFALMTPQ. The helical transmembrane segment at 124–144 threads the bilayer; that stretch reads MVLTLGLSGVLAAVIAFWVKI. Residues 145–154 are Cytoplasmic-facing; the sequence is RPATPRLRSG. The helical transmembrane segment at 155–175 threads the bilayer; it reads LYRLASVLISILLVILVAAFF. Topologically, residues 176 to 547 are periplasmic; it reads YKDYASLFRN…ILQPCRRLSE (372 aa).

Belongs to the phosphoethanolamine transferase family. EptA subfamily.

Its subcellular location is the cell inner membrane. It functions in the pathway bacterial outer membrane biogenesis; LPS lipid A biosynthesis. Its function is as follows. Catalyzes the addition of a phosphoethanolamine moiety to the lipid A. The phosphoethanolamine modification is required for resistance to polymyxin. The protein is Phosphoethanolamine transferase EptA (eptA) of Salmonella typhimurium (strain LT2 / SGSC1412 / ATCC 700720).